Here is a 398-residue protein sequence, read N- to C-terminus: G2/mitotic-specific cyclin-B2 (398 aa).

Disordered regions lie at residues 1–26 and 53–76; these read MALL…KPKS and AQNT…KPTA. A Phosphothreonine modification is found at Thr8. Positions 8–23 are enriched in polar residues; that stretch reads TVSTDLENNDTGVNSK. The segment covering 55 to 69 has biased composition (low complexity); that stretch reads NTKVPVPPTKTTNVN. Residues Ser77 and Ser92 each carry the phosphoserine modification. Thr94 is modified (phosphothreonine). Ser99, Ser392, and Ser398 each carry phosphoserine.

This sequence belongs to the cyclin family. Cyclin AB subfamily. Interacts with the CDK1 protein kinase to form a serine/threonine kinase holoenzyme complex also known as maturation promoting factor (MPF). The cyclin subunit imparts substrate specificity to the complex.

Essential for the control of the cell cycle at the G2/M (mitosis) transition. The sequence is that of G2/mitotic-specific cyclin-B2 (CCNB2) from Bos taurus (Bovine).